Reading from the N-terminus, the 359-residue chain is Guanine nucleotide-binding protein subunit alpha-11 (359 aa).

S-palmitoyl cysteine attachment occurs at residues Cys-9 and Cys-10. Positions 38-359 (RELKLLLLGT…QLNLKEYNLV (322 aa)) constitute a G-alpha domain. Residues 41–54 (KLLLLGTGESGKST) form a G1 motif region. Residues 46–53 (GTGESGKS) and 180–183 (LRVR) each bind GTP. Ser-53 contacts Mg(2+). The interval 178–186 (DVLRVRVPT) is G2 motif. Thr-186 provides a ligand contact to Mg(2+). Residues 201–210 (FRMVDVGGQR) form a G3 motif region. Residues 270–277 (ILFLNKKD) form a G4 motif region. Residues 274–277 (NKKD) and Ala-331 contribute to the GTP site. Residues 329-334 (TCATDT) form a G5 motif region.

This sequence belongs to the G-alpha family. G(q) subfamily. G proteins are composed of 3 units; alpha, beta and gamma. The alpha chain contains the guanine nucleotide binding site. Interacts with RGS22. Interacts with NTSR1.

The protein localises to the cell membrane. It localises to the cytoplasm. The catalysed reaction is GTP + H2O = GDP + phosphate + H(+). Functionally, guanine nucleotide-binding proteins (G proteins) function as transducers downstream of G protein-coupled receptors (GPCRs) in numerous signaling cascades. The alpha chain contains the guanine nucleotide binding site and alternates between an active, GTP-bound state and an inactive, GDP-bound state. Signaling by an activated GPCR promotes GDP release and GTP binding. The alpha subunit has a low GTPase activity that converts bound GTP to GDP, thereby terminating the signal. Both GDP release and GTP hydrolysis are modulated by numerous regulatory proteins. Signaling is mediated via phospholipase C-beta-dependent inositol lipid hydrolysis for signal propagation: activates phospholipase C-beta: following GPCR activation, GNA11 activates PLC-beta (PLCB1, PLCB2, PLCB3 or PLCB4), leading to production of diacylglycerol (DAG) and inositol 1,4,5-trisphosphate (IP3). Transduces FFAR4 signaling in response to long-chain fatty acids (LCFAs). Together with GNAQ, required for heart development. In the respiratory epithelium, transmits OXGR1-dependent signals that lead to downstream intracellular Ca(2+) release and mucocilliary clearance of airborne pathogens. This is Guanine nucleotide-binding protein subunit alpha-11 (Gna11) from Mus musculus (Mouse).